A 50-amino-acid chain; its full sequence is Large ribosomal subunit protein bL33 (50 aa).

Belongs to the bacterial ribosomal protein bL33 family.

The chain is Large ribosomal subunit protein bL33 from Endomicrobium trichonymphae.